Consider the following 67-residue polypeptide: Large ribosomal subunit protein bL35 (67 aa).

It belongs to the bacterial ribosomal protein bL35 family.

This Rickettsia prowazekii (strain Madrid E) protein is Large ribosomal subunit protein bL35.